Here is a 351-residue protein sequence, read N- to C-terminus: MNGTEGQDFYVPMSNKTGVVRSPFEYPQYYLAEPWKFSALAAYMFMLILLGFPVNFLTLYVTIQHKKLRTPLNYILLNLVVADLFMVFGGFTTTMYTSMNGYFVFGVTGCYIEGFFATLGGEIALWSLVVLAVERYVVVCKPMSNFRFGENHAIMGVAFSWIMAMACAAPPLFGWSRYIPEGMQCSCGIDYYTLKPEINNESFVIYMFVVHFMIPLAVIFFCYGNLVCTVKEAAAQQQESATTQKAEKEVTRMVIIMVIAFLICWVPYASVAFYIFTNQGSDFGPIFMTIPAFFAKSSAIYNPVIYIVMNKQFRNCMITTLCCGKNPLGDEDTSAGKTETSSVSTSQVSPA.

The Extracellular portion of the chain corresponds to 1–36 (MNGTEGQDFYVPMSNKTGVVRSPFEYPQYYLAEPWK). N-linked (GlcNAc...) asparagine glycans are attached at residues Asn2 and Asn15. Residues 37–61 (FSALAAYMFMLILLGFPVNFLTLYV) form a helical membrane-spanning segment. The Cytoplasmic segment spans residues 62–73 (TIQHKKLRTPLN). A helical transmembrane segment spans residues 74 to 96 (YILLNLVVADLFMVFGGFTTTMY). Topologically, residues 97–110 (TSMNGYFVFGVTGC) are extracellular. Cys110 and Cys187 form a disulfide bridge. The helical transmembrane segment at 111–133 (YIEGFFATLGGEIALWSLVVLAV) threads the bilayer. The 'Ionic lock' involved in activated form stabilization motif lies at 134–136 (ERY). Topologically, residues 134–152 (ERYVVVCKPMSNFRFGENH) are cytoplasmic. The chain crosses the membrane as a helical span at residues 153 to 173 (AIMGVAFSWIMAMACAAPPLF). Over 174 to 202 (GWSRYIPEGMQCSCGIDYYTLKPEINNES) the chain is Extracellular. The helical transmembrane segment at 203–224 (FVIYMFVVHFMIPLAVIFFCYG) threads the bilayer. The Cytoplasmic segment spans residues 225–252 (NLVCTVKEAAAQQQESATTQKAEKEVTR). A helical membrane pass occupies residues 253–274 (MVIIMVIAFLICWVPYASVAFY). The Extracellular segment spans residues 275-286 (IFTNQGSDFGPI). A helical membrane pass occupies residues 287 to 308 (FMTIPAFFAKSSAIYNPVIYIV). Lys296 is subject to N6-(retinylidene)lysine. Residues 309 to 351 (MNKQFRNCMITTLCCGKNPLGDEDTSAGKTETSSVSTSQVSPA) lie on the Cytoplasmic side of the membrane. 2 S-palmitoyl cysteine lipidation sites follow: Cys322 and Cys323. The tract at residues 331-351 (EDTSAGKTETSSVSTSQVSPA) is disordered. Low complexity predominate over residues 340–351 (TSSVSTSQVSPA). Residue Ser341 is modified to Phosphoserine; by RK and GRK7.

It belongs to the G-protein coupled receptor 1 family. Opsin subfamily. In terms of processing, contains one covalently linked retinal chromophore. Upon light absorption, the covalently bound 11-cis-retinal is converted to all-trans-retinal. After hydrolysis of the Schiff base and release of the covalently bound all-trans-retinal, active rhodopsin is regenerated by binding of a fresh molecule of 11-cis-retinal.

The protein localises to the membrane. It localises to the cell projection. Its subcellular location is the cilium. It is found in the photoreceptor outer segment. Functionally, photoreceptor required for image-forming vision at low light intensity. Required for photoreceptor cell viability after birth. Light-induced isomerization of 11-cis to all-trans retinal triggers a conformational change that activates signaling via G-proteins. Subsequent receptor phosphorylation mediates displacement of the bound G-protein alpha subunit by arrestin and terminates signaling. The polypeptide is Rhodopsin (RHO) (Gallus gallus (Chicken)).